A 419-amino-acid chain; its full sequence is Ribosome biogenesis protein WDR12 homolog (419 aa).

The segment at 10 to 91 is ubiquitin-like (UBL) domain; the sequence is VQVHLKTKQE…EDAIDIEYVE (82 aa). 7 WD repeats span residues 103-140, 142-184, 191-230, 249-287, 289-328, 334-374, and 378-416; these read LHDD…KLTI, GHTA…NAVE, GHER…TSEG, GHRE…IKTE, STNK…GSVV, GHNA…APLY, and GHGE…IENM.

The protein belongs to the WD repeat WDR12/YTM1 family.

The protein localises to the nucleus. The protein resides in the nucleolus. It is found in the nucleoplasm. Its function is as follows. Required for maturation of ribosomal RNAs and formation of the large ribosomal subunit. This chain is Ribosome biogenesis protein WDR12 homolog, found in Drosophila virilis (Fruit fly).